An 884-amino-acid polypeptide reads, in one-letter code: Protein P (884 aa).

A terminal protein domain (TP) region spans residues 1-184 (MHPFSRLFRN…GKPYSWEHRQ (184 aa)). Residues 185–387 (LVQHNGQQHK…YCIHHIVSSL (203 aa)) are spacer. The interval 299-345 (RNSGHTTWFSSASNSNKSRSREKAYSSNSTSKRYSPPLNYEKSDFSS) is disordered. Positions 388–729 (DDWGPCTVTG…YEELWPVVRQ (342 aa)) are polymerase/reverse transcriptase domain (RT). The region spanning 398-639 (DVTIKSPRTP…NHLHFMGYVI (242 aa)) is the Reverse transcriptase domain. Mg(2+)-binding residues include D470, D590, and D591.

The protein belongs to the hepadnaviridae P protein family.

It carries out the reaction DNA(n) + a 2'-deoxyribonucleoside 5'-triphosphate = DNA(n+1) + diphosphate. It catalyses the reaction Endonucleolytic cleavage to 5'-phosphomonoester.. With respect to regulation, activated by host HSP70 and HSP40 in vitro to be able to bind the epsilon loop of the pgRNA. Because deletion of the RNase H region renders the protein partly chaperone-independent, the chaperones may be needed indirectly to relieve occlusion of the RNA-binding site by this domain. Inhibited by several reverse-transcriptase inhibitors: Lamivudine, Adefovir and Entecavir. Its function is as follows. Multifunctional enzyme that converts the viral RNA genome into dsDNA in viral cytoplasmic capsids. This enzyme displays a DNA polymerase activity that can copy either DNA or RNA templates, and a ribonuclease H (RNase H) activity that cleaves the RNA strand of RNA-DNA heteroduplexes in a partially processive 3'- to 5'-endonucleasic mode. Neo-synthesized pregenomic RNA (pgRNA) are encapsidated together with the P protein, and reverse-transcribed inside the nucleocapsid. Initiation of reverse-transcription occurs first by binding the epsilon loop on the pgRNA genome, and is initiated by protein priming, thereby the 5'-end of (-)DNA is covalently linked to P protein. Partial (+)DNA is synthesized from the (-)DNA template and generates the relaxed circular DNA (RC-DNA) genome. After budding and infection, the RC-DNA migrates in the nucleus, and is converted into a plasmid-like covalently closed circular DNA (cccDNA). The activity of P protein does not seem to be necessary for cccDNA generation, and is presumably released from (+)DNA by host nuclear DNA repair machinery. The protein is Protein P of Marmota monax (Woodchuck).